The primary structure comprises 208 residues: Uridine kinase (208 aa).

12–19 provides a ligand contact to ATP; sequence GGSGGGKT.

Belongs to the uridine kinase family.

It localises to the cytoplasm. It carries out the reaction uridine + ATP = UMP + ADP + H(+). It catalyses the reaction cytidine + ATP = CMP + ADP + H(+). The protein operates within pyrimidine metabolism; CTP biosynthesis via salvage pathway; CTP from cytidine: step 1/3. Its pathway is pyrimidine metabolism; UMP biosynthesis via salvage pathway; UMP from uridine: step 1/1. This chain is Uridine kinase, found in Streptococcus pyogenes serotype M3 (strain ATCC BAA-595 / MGAS315).